Reading from the N-terminus, the 305-residue chain is Glycine--tRNA ligase alpha subunit (305 aa).

This sequence belongs to the class-II aminoacyl-tRNA synthetase family. Tetramer of two alpha and two beta subunits.

It localises to the cytoplasm. It carries out the reaction tRNA(Gly) + glycine + ATP = glycyl-tRNA(Gly) + AMP + diphosphate. This Streptococcus pneumoniae (strain 70585) protein is Glycine--tRNA ligase alpha subunit.